The sequence spans 776 residues: Ent-8-alpha-hydroxylabd-13-en-15-yl diphosphate synthase CPS4, chloroplastic (776 aa).

A chloroplast-targeting transit peptide spans 1–60 (MSFASNATGFRIPLTTCVYPSPILRFNAKVGSGSSYGTTEAQRNMKCVDGIGRSRVVAVA). Substrate is bound at residue lysine 226. The Mg(2+) site is built by aspartate 357 and aspartate 359. Residues 357 to 360 (DSDD) carry the DXDD motif motif. Lysine 443 provides a ligand contact to substrate.

The protein belongs to the terpene synthase family. The cofactor is Mg(2+).

It localises to the plastid. Its subcellular location is the chloroplast. It carries out the reaction ent-8alpha-hydroxylabd-13-en-15-yl diphosphate = (2E,6E,10E)-geranylgeranyl diphosphate + H2O. Its pathway is secondary metabolite biosynthesis; terpenoid biosynthesis. In terms of biological role, involved in diterpenoid biosynthesis. Catalyzes the conversion of all-trans-geranylgeranyl diphosphate to ent-8alpha-hydroxylabd-13-en-15-yl diphosphate. This chain is Ent-8-alpha-hydroxylabd-13-en-15-yl diphosphate synthase CPS4, chloroplastic, found in Salvia miltiorrhiza (Chinese sage).